We begin with the raw amino-acid sequence, 924 residues long: Periplasmic nitrate reductase (924 aa).

A signal peptide (tat-type signal) is located at residues 1–30 (MNRRDFIKNTAIASAASVAGLSVPSSMLGA). The 4Fe-4S Mo/W bis-MGD-type domain occupies 35–91 (WKWDKAVCRFCGTGCGIMIARKDGKIVATKGDPAAPVNRGLNCIKGYFNAKIMYGED). [4Fe-4S] cluster is bound by residues C42, C45, C49, and C77. Residues K79, Q147, N172, C176, 209-216 (WGANMAEM), M417, Q421, N527, 552-553 (SD), K575, D602, and 814-823 (TGRVLEHWHS) contribute to the Mo-bis(molybdopterin guanine dinucleotide) site. Position 890 (W890) interacts with substrate. 2 residues coordinate Mo-bis(molybdopterin guanine dinucleotide): N898 and K915.

Belongs to the prokaryotic molybdopterin-containing oxidoreductase family. NasA/NapA/NarB subfamily. Component of the periplasmic nitrate reductase NapAB complex composed of NapA and NapB. [4Fe-4S] cluster serves as cofactor. Mo-bis(molybdopterin guanine dinucleotide) is required as a cofactor. Predicted to be exported by the Tat system. The position of the signal peptide cleavage has not been experimentally proven.

It is found in the periplasm. The catalysed reaction is 2 Fe(II)-[cytochrome] + nitrate + 2 H(+) = 2 Fe(III)-[cytochrome] + nitrite + H2O. Catalytic subunit of the periplasmic nitrate reductase complex NapAB. Receives electrons from NapB and catalyzes the reduction of nitrate to nitrite. This Campylobacter jejuni subsp. jejuni serotype O:6 (strain 81116 / NCTC 11828) protein is Periplasmic nitrate reductase.